A 213-amino-acid polypeptide reads, in one-letter code: ATP synthase peripheral stalk subunit OSCP, mitochondrial (213 aa).

The transit peptide at 1–23 (MAAPAVSGLSRQVRCFSTSVVRP) directs the protein to the mitochondrion. Residues 5–23 (AVSGLSRQVRCFSTSVVRP) carry the SIFI-degron motif. An N6-acetyllysine mark is found at K54, K60, K70, and K73. K90 is subject to N6-succinyllysine. 2 positions are modified to N6-acetyllysine; alternate: K158 and K162. Residues K158 and K162 each carry the N6-succinyllysine; alternate modification. An N6-acetyllysine mark is found at K172, K176, and K192. At K199 the chain carries N6-succinyllysine.

Belongs to the ATPase delta chain family. As to quaternary structure, component of the ATP synthase complex composed at least of ATP5F1A/subunit alpha, ATP5F1B/subunit beta, ATP5MC1/subunit c (homooctomer), MT-ATP6/subunit a, MT-ATP8/subunit 8, ATP5ME/subunit e, ATP5MF/subunit f, ATP5MG/subunit g, ATP5MK/subunit k, ATP5MJ/subunit j, ATP5F1C/subunit gamma, ATP5F1D/subunit delta, ATP5F1E/subunit epsilon, ATP5PF/subunit F6, ATP5PB/subunit b, ATP5PD/subunit d, ATP5PO/subunit OSCP. ATP synthase complex consists of a soluble F(1) head domain (subunits alpha(3) and beta(3)) - the catalytic core - and a membrane F(0) domain - the membrane proton channel (subunits c, a, 8, e, f, g, k and j). These two domains are linked by a central stalk (subunits gamma, delta, and epsilon) rotating inside the F1 region and a stationary peripheral stalk (subunits F6, b, d, and OSCP). Acetylation at Lys-162 decreases ATP production. Deacetylated by SIRT3. In terms of processing, in response to mitochondrial stress, the precursor protein is ubiquitinated by the SIFI complex in the cytoplasm before mitochondrial import, leading to its degradation. Within the SIFI complex, UBR4 initiates ubiquitin chain that are further elongated or branched by KCMF1.

It is found in the mitochondrion. The protein localises to the mitochondrion inner membrane. Functionally, subunit OSCP, of the mitochondrial membrane ATP synthase complex (F(1)F(0) ATP synthase or Complex V) that produces ATP from ADP in the presence of a proton gradient across the membrane which is generated by electron transport complexes of the respiratory chain. ATP synthase complex consist of a soluble F(1) head domain - the catalytic core - and a membrane F(1) domain - the membrane proton channel. These two domains are linked by a central stalk rotating inside the F(1) region and a stationary peripheral stalk. During catalysis, ATP synthesis in the catalytic domain of F(1) is coupled via a rotary mechanism of the central stalk subunits to proton translocation. In vivo, can only synthesize ATP although its ATP hydrolase activity can be activated artificially in vitro. Part of the complex F(0) domain. Part of the complex F(0) domain and the peripheric stalk, which acts as a stator to hold the catalytic alpha(3)beta(3) subcomplex and subunit a/ATP6 static relative to the rotary elements. The sequence is that of ATP synthase peripheral stalk subunit OSCP, mitochondrial from Homo sapiens (Human).